The chain runs to 492 residues: Ketol-acid reductoisomerase (NADP(+)) (492 aa).

A KARI N-terminal Rossmann domain is found at 14-208 (LDQLGKCRFM…GGHRAGVLQS (195 aa)). Residues 45-48 (CGAQ), Arg-68, Arg-76, Ser-78, and 108-110 (DKQ) contribute to the NADP(+) site. His-132 is an active-site residue. An NADP(+)-binding site is contributed by Gly-158. KARI C-terminal knotted domains follow at residues 209–344 (SFVA…NAPQ) and 345–485 (FDGK…MKDM). Mg(2+) is bound by residues Asp-217, Glu-221, Glu-389, and Glu-393. Substrate is bound at residue Ser-414.

The protein belongs to the ketol-acid reductoisomerase family. Mg(2+) is required as a cofactor.

The catalysed reaction is (2R)-2,3-dihydroxy-3-methylbutanoate + NADP(+) = (2S)-2-acetolactate + NADPH + H(+). It catalyses the reaction (2R,3R)-2,3-dihydroxy-3-methylpentanoate + NADP(+) = (S)-2-ethyl-2-hydroxy-3-oxobutanoate + NADPH + H(+). It participates in amino-acid biosynthesis; L-isoleucine biosynthesis; L-isoleucine from 2-oxobutanoate: step 2/4. It functions in the pathway amino-acid biosynthesis; L-valine biosynthesis; L-valine from pyruvate: step 2/4. In terms of biological role, involved in the biosynthesis of branched-chain amino acids (BCAA). Catalyzes an alkyl-migration followed by a ketol-acid reduction of (S)-2-acetolactate (S2AL) to yield (R)-2,3-dihydroxy-isovalerate. In the isomerase reaction, S2AL is rearranged via a Mg-dependent methyl migration to produce 3-hydroxy-3-methyl-2-ketobutyrate (HMKB). In the reductase reaction, this 2-ketoacid undergoes a metal-dependent reduction by NADPH to yield (R)-2,3-dihydroxy-isovalerate. The chain is Ketol-acid reductoisomerase (NADP(+)) from Pectobacterium atrosepticum (strain SCRI 1043 / ATCC BAA-672) (Erwinia carotovora subsp. atroseptica).